We begin with the raw amino-acid sequence, 1396 residues long: DNA-directed RNA polymerase subunit beta' (1396 aa).

Residues C73, C75, C88, and C91 each coordinate Zn(2+). Mg(2+) contacts are provided by D467, D469, and D471. Residues C817, C891, C898, and C901 each coordinate Zn(2+).

The protein belongs to the RNA polymerase beta' chain family. In terms of assembly, the RNAP catalytic core consists of 2 alpha, 1 beta, 1 beta' and 1 omega subunit. When a sigma factor is associated with the core the holoenzyme is formed, which can initiate transcription. It depends on Mg(2+) as a cofactor. Zn(2+) is required as a cofactor.

The catalysed reaction is RNA(n) + a ribonucleoside 5'-triphosphate = RNA(n+1) + diphosphate. DNA-dependent RNA polymerase catalyzes the transcription of DNA into RNA using the four ribonucleoside triphosphates as substrates. The sequence is that of DNA-directed RNA polymerase subunit beta' from Orientia tsutsugamushi (strain Ikeda) (Rickettsia tsutsugamushi).